Here is a 211-residue protein sequence, read N- to C-terminus: Endonuclease Htp3 (211 aa).

An N-terminal signal peptide occupies residues methionine 1–glycine 20. The RxLR signature appears at arginine 48–arginine 51. Residues arginine 48–leucine 198 form the TNase-like domain. Ca(2+) is bound at residue aspartate 77. Arginine 90 is a catalytic residue. Aspartate 95 provides a ligand contact to Ca(2+). Residues glutamate 98 and arginine 138 contribute to the active site. Asparagine 153 carries an N-linked (GlcNAc...) asparagine glycan. The tract at residues lysine 200–lysine 211 is binding to the host cell surface.

In the N-terminal section; belongs to the RxLR effector family. This sequence in the C-terminal section; belongs to the LCL3 family. Interacts with the host cell surface endoplasmin gp96, in order to get translocated into to host cell. Interacts with the effector Htp1, in order to get released from vesicles into the host cytosol.

Its subcellular location is the secreted. The protein localises to the host cytoplasm. The protein resides in the host cytosol. With respect to regulation, the nuclease activity shows a general salt dependency with a clear reduction by magnesium and sulfate ions. Its function is as follows. Effector involved in the disease saprolegniosis in salmonids and other freshwater fish, resulting in considerable economic losses in aquaculture. Within the host fish cells, Htp3 is released from vesicles into host cytosol where it degrades nucleic acids. In Saprolegnia parasitica (strain CBS 223.65), this protein is Endonuclease Htp3 (HTP3).